A 153-amino-acid polypeptide reads, in one-letter code: Prostaglandin E synthase (153 aa).

The Lumenal segment spans residues 1 to 13 (MTSLGLVMENSQV). Residues 14–42 (LPAFLLCSTLLVIKMYAVAVITGQVRLRK) traverse the membrane as a helical segment. Arg-39 provides a ligand contact to glutathione. The Cytoplasmic portion of the chain corresponds to 43-61 (KAFANPEDALKRGGLQYCR). A helical membrane pass occupies residues 62–91 (SDPDVERCLRAHRNDMETIYPFLFLGFVYS). 74 to 78 (RNDME) serves as a coordination point for glutathione. Residues 92–98 (FLGPNPL) are Lumenal-facing. The chain crosses the membrane as a helical span at residues 99-120 (IAWIHFLVVLTGRVVHTVAYLG). Glutathione is bound by residues His-114 and Tyr-118. Residues 121–124 (KMNP) lie on the Cytoplasmic side of the membrane. The helical transmembrane segment at 125 to 153 (RIRSGAYVLAQFACFSMALQILWEVAHHL) threads the bilayer. 127–131 (RSGAY) is a binding site for glutathione.

It belongs to the MAPEG family. Glutathione is required as a cofactor.

It is found in the membrane. The protein resides in the cytoplasm. The protein localises to the perinuclear region. It carries out the reaction prostaglandin H2 = prostaglandin E2. The enzyme catalyses 2-glyceryl-prostaglandin H2 = 2-glyceryl-prostaglandin E2. The catalysed reaction is prostaglandin G2 = (15S)-15-hydroperoxy-prostaglandin E2. It catalyses the reaction 1-chloro-2,4-dinitrobenzene + glutathione = 2,4-dinitrophenyl-S-glutathione + chloride + H(+). It carries out the reaction (5S)-hydroperoxy-(6E,8Z,11Z,14Z)-eicosatetraenoate + 2 glutathione = (5S)-hydroxy-(6E,8Z,11Z,14Z)-eicosatetraenoate + glutathione disulfide + H2O. It participates in lipid metabolism; prostaglandin biosynthesis. Activity is increased following LPS stimulation and down-regulated by the anti-inflammatory glucocorticoid dexamethasone. Its function is as follows. Terminal enzyme of the cyclooxygenase (COX)-2-mediated prostaglandin E2 (PGE2) biosynthetic pathway. Catalyzes the glutathione-dependent oxidoreduction of prostaglandin endoperoxide H2 (PGH2) to prostaglandin E2 (PGE2) in response to inflammatory stimuli. Plays a key role in inflammation response, fever and pain. Also catalyzes the oxidoreduction of endocannabinoids into prostaglandin glycerol esters and PGG2 into 15-hydroperoxy-PGE2. In addition, displays low glutathione transferase and glutathione-dependent peroxidase activities, toward 1-chloro-2,4-dinitrobenzene and 5-hydroperoxyicosatetraenoic acid (5-HPETE), respectively. The polypeptide is Prostaglandin E synthase (Ptges) (Rattus norvegicus (Rat)).